The chain runs to 139 residues: uncharacterized protein (139 aa).

The HTH asnC-type domain occupies 1 to 62 (MDDTDLQILS…NICYEKLNKH (62 aa)). Positions 20–39 (MVELGKLVGLSSPSAAERVR) form a DNA-binding region, H-T-H motif.

This is an uncharacterized protein from Bacillus subtilis (strain 168).